The following is a 223-amino-acid chain: Large ribosomal subunit protein uL3 (223 aa).

It belongs to the universal ribosomal protein uL3 family. Part of the 50S ribosomal subunit. Forms a cluster with proteins L14 and L19.

Functionally, one of the primary rRNA binding proteins, it binds directly near the 3'-end of the 23S rRNA, where it nucleates assembly of the 50S subunit. The chain is Large ribosomal subunit protein uL3 from Nocardioides sp. (strain ATCC BAA-499 / JS614).